A 162-amino-acid polypeptide reads, in one-letter code: Large ribosomal subunit protein uL10 (162 aa).

It belongs to the universal ribosomal protein uL10 family. As to quaternary structure, part of the ribosomal stalk of the 50S ribosomal subunit. The N-terminus interacts with L11 and the large rRNA to form the base of the stalk. The C-terminus forms an elongated spine to which L12 dimers bind in a sequential fashion forming a multimeric L10(L12)X complex.

Its function is as follows. Forms part of the ribosomal stalk, playing a central role in the interaction of the ribosome with GTP-bound translation factors. The polypeptide is Large ribosomal subunit protein uL10 (rplJ) (Mycoplasma genitalium (strain ATCC 33530 / DSM 19775 / NCTC 10195 / G37) (Mycoplasmoides genitalium)).